The chain runs to 105 residues: Nucleoid-associated protein SaurJH1_0513 (105 aa).

Residues 1–33 (MRGGGNMQQMMKQMQKMQKKMAQEQKKLKEERI) form a disordered region. Residues 7 to 16 (MQQMMKQMQK) are compositionally biased toward low complexity. The span at 21 to 33 (MAQEQKKLKEERI) shows a compositional bias: basic and acidic residues.

This sequence belongs to the YbaB/EbfC family. As to quaternary structure, homodimer.

The protein resides in the cytoplasm. Its subcellular location is the nucleoid. Binds to DNA and alters its conformation. May be involved in regulation of gene expression, nucleoid organization and DNA protection. The polypeptide is Nucleoid-associated protein SaurJH1_0513 (Staphylococcus aureus (strain JH1)).